Reading from the N-terminus, the 309-residue chain is HPr kinase/phosphorylase (309 aa).

Catalysis depends on residues His138 and Lys159. 153–160 (GDSGIGKS) is an ATP binding site. Ser160 provides a ligand contact to Mg(2+). Residue Asp177 is the Proton acceptor; for phosphorylation activity. Proton donor; for dephosphorylation activity of the active site. The important for the catalytic mechanism of both phosphorylation and dephosphorylation stretch occupies residues 201–210 (LEIRGVGIID). Residue Glu202 coordinates Mg(2+). Arg243 is a catalytic residue. Residues 264-269 (PVKTGR) form an important for the catalytic mechanism of dephosphorylation region.

It belongs to the HPrK/P family. As to quaternary structure, homohexamer. Requires Mg(2+) as cofactor.

The enzyme catalyses [HPr protein]-L-serine + ATP = [HPr protein]-O-phospho-L-serine + ADP + H(+). The catalysed reaction is [HPr protein]-O-phospho-L-serine + phosphate + H(+) = [HPr protein]-L-serine + diphosphate. Its function is as follows. Catalyzes the ATP- as well as the pyrophosphate-dependent phosphorylation of a specific serine residue in HPr, a phosphocarrier protein of the phosphoenolpyruvate-dependent sugar phosphotransferase system (PTS). HprK/P also catalyzes the pyrophosphate-producing, inorganic phosphate-dependent dephosphorylation (phosphorolysis) of seryl-phosphorylated HPr (P-Ser-HPr). The two antagonistic activities of HprK/P are regulated by several intracellular metabolites, which change their concentration in response to the absence or presence of rapidly metabolisable carbon sources (glucose, fructose, etc.) in the growth medium. Therefore, by controlling the phosphorylation state of HPr, HPrK/P is a sensor enzyme that plays a major role in the regulation of carbon metabolism and sugar transport: it mediates carbon catabolite repression (CCR), and regulates PTS-catalyzed carbohydrate uptake and inducer exclusion. The polypeptide is HPr kinase/phosphorylase (Streptococcus thermophilus (strain ATCC BAA-491 / LMD-9)).